A 245-amino-acid polypeptide reads, in one-letter code: Balbiani ring A 28 kDa protein (245 aa).

The first 16 residues, 1–16 (MKSIIKHILFVVLLIS), serve as a signal peptide directing secretion. Residues Ser33, Ser40, Ser92, Ser93, and Ser115 each carry the phosphoserine modification.

In terms of tissue distribution, salivary gland.

The protein localises to the secreted. Its function is as follows. Used by the larvae to construct a supramolecular structure, the larval tube. The protein is Balbiani ring A 28 kDa protein of Chironomus thummi thummi (Midge).